We begin with the raw amino-acid sequence, 322 residues long: Fructose-1,6-bisphosphatase class 1 (322 aa).

Mg(2+)-binding residues include Glu84, Asp103, Leu105, and Asp106. Substrate contacts are provided by residues 106–109 (DGSS), Asn198, and Lys264. Glu270 provides a ligand contact to Mg(2+).

The protein belongs to the FBPase class 1 family. As to quaternary structure, homotetramer. Requires Mg(2+) as cofactor.

The protein localises to the cytoplasm. It catalyses the reaction beta-D-fructose 1,6-bisphosphate + H2O = beta-D-fructose 6-phosphate + phosphate. It participates in carbohydrate biosynthesis; gluconeogenesis. This Saccharophagus degradans (strain 2-40 / ATCC 43961 / DSM 17024) protein is Fructose-1,6-bisphosphatase class 1.